Here is a 463-residue protein sequence, read N- to C-terminus: Argininosuccinate lyase (463 aa).

It belongs to the lyase 1 family. Argininosuccinate lyase subfamily.

It is found in the cytoplasm. The enzyme catalyses 2-(N(omega)-L-arginino)succinate = fumarate + L-arginine. The protein operates within amino-acid biosynthesis; L-arginine biosynthesis; L-arginine from L-ornithine and carbamoyl phosphate: step 3/3. This chain is Argininosuccinate lyase, found in Staphylococcus epidermidis (strain ATCC 35984 / DSM 28319 / BCRC 17069 / CCUG 31568 / BM 3577 / RP62A).